A 265-amino-acid polypeptide reads, in one-letter code: MQGIVVIKCGGSTMDQLPDSFFQAIAGLQAQGQEIVIVHGGGPAINSMLDRVQITPQFVDGLRVTCEDTLRVVEMVLCGSINKALVKRLTQAGAKAWGVSGIDGQTLLATKTPKPLGWVGEIKKADMTIPKAILEQGFVPVIAPLSVSEDGTETYNVNADVAAGAIAAALSAEKLIMVTDVPGIMQPQPDGTKAVVSATSAEEIQEMIREEIITGGMIPKVQAALDALGQGVEQVVICRGTAEDLLGVCAGQAVGTTVRMNVNYA.

Residues Gly41–Gly42, Arg63, and Asn156 contribute to the substrate site.

This sequence belongs to the acetylglutamate kinase family. ArgB subfamily.

Its subcellular location is the cytoplasm. It catalyses the reaction N-acetyl-L-glutamate + ATP = N-acetyl-L-glutamyl 5-phosphate + ADP. Its pathway is amino-acid biosynthesis; L-arginine biosynthesis; N(2)-acetyl-L-ornithine from L-glutamate: step 2/4. In terms of biological role, catalyzes the ATP-dependent phosphorylation of N-acetyl-L-glutamate. This Brevibacillus brevis (strain 47 / JCM 6285 / NBRC 100599) protein is Acetylglutamate kinase.